The sequence spans 437 residues: MRRYFGTDGVRGEAGKPPLTPEFVLKLGQAAGAYFLAQEKRPVVLLAKDTRESSDLLEAALAAGLMSQGVRVEHLGVLPTPGVAHLTKALKATAGAVISASHNPYQDNGIKFFGPTGEKLPDGAEEEIERLLLEDHPTRGIGTVGDFREAERMYLDFLLAHAPDLTGLKVGLDLAHGATYRIGPKLFQKAGAEVMAFFNTPDGRNINRGCGSTHPEALSRFVVELGLDLGIAFDGDGDRVQFIDRKGRLFHGDHVLYLAALAFGEKGVVGTVMSNMALEVALKERGLAFHRAAVGDRYVLEKLKETGLALGGEPSGHVIFLRHHTTGDGLLTALLTLKALKALGGDLADWYEALPLYPQVLLNVRVSDKAKVMADPRLGEAVREAEARLGGRGRVNVRPSGTEPVVRVMVEAEEGAEEVARELAERVRALSQEAQAV.

The Phosphoserine intermediate role is filled by Ser101. Residues Ser101, Asp234, Asp236, and Asp238 each contribute to the Mg(2+) site. At Ser101 the chain carries Phosphoserine.

Belongs to the phosphohexose mutase family. It depends on Mg(2+) as a cofactor. Post-translationally, activated by phosphorylation.

The catalysed reaction is alpha-D-glucosamine 1-phosphate = D-glucosamine 6-phosphate. Functionally, catalyzes the conversion of glucosamine-6-phosphate to glucosamine-1-phosphate. This Thermus thermophilus (strain ATCC 27634 / DSM 579 / HB8) protein is Phosphoglucosamine mutase.